Here is a 364-residue protein sequence, read N- to C-terminus: MKVTRFMFWLFSMLLPSVKSQASETEVPCNFSRRNYTLIPEGISTNVTILDLSYNRITLNAADSRVLQMYSLLTELYLMENNIIALYNSSFRNLLNLEILNICGNSISVIQQGSFVGLNELKQLFLCQNKILQLNPDTFVPLNNLKVLNLQGNLIRLFDAPQLPHLEILTLDGNPWNCTCGLLELHNWLNTSNVTLENENMTMCSYPDELKHDSIKSAPFTTECHSTFISTITEDFQSTRNSSFNSSSHNLTWTSEHEPLGKSWAFLVGVVATVLLTSLLIFIAIKCPVWYNILLSYNHHRLEEHEAETYENGLTRNPSSLSQITDTNSEDTTVIFEQLHAFVVDDDGFIEDRYIDINEVHEEK.

The N-terminal stretch at 1-20 is a signal peptide; that stretch reads MKVTRFMFWLFSMLLPSVKS. Residues 21 to 264 are Extracellular-facing; that stretch reads QASETEVPCN…SEHEPLGKSW (244 aa). N-linked (GlcNAc...) asparagine glycosylation is found at Asn30, Asn35, Asn46, and Asn88. LRR repeat units lie at residues 44–69, 70–93, 94–117, 118–141, 143–163, and 164–190; these read STNV…VLQM, YSLL…SFRN, LLNL…SFVG, LNEL…TFVP, NNLK…APQL, and PHLE…NWLN. The LRRCT domain maps to 174 to 225; that stretch reads NPWNCTCGLLELHNWLNTSNVTLENENMTMCSYPDELKHDSIKSAPFTTECH. N-linked (GlcNAc...) asparagine glycans are attached at residues Asn177, Asn190, Asn193, Asn200, Asn241, Asn245, and Asn250. Residues 265 to 285 form a helical membrane-spanning segment; the sequence is AFLVGVVATVLLTSLLIFIAI. The Cytoplasmic portion of the chain corresponds to 286–364; the sequence is KCPVWYNILL…IDINEVHEEK (79 aa).

In terms of assembly, interacts with TRAF2 and TRAF6. Strongly expressed in kidney, also expressed in spleen, intestine and colon. Highly expressed in epithelial cells. In kidney, mainly expressed in renal collecting duct epithelial cells.

It is found in the membrane. Activated by TLR ligands such as LPS, bacterial DNA and peptidoglycan. Pathogen-recognition receptor which mediates the activation of TRAF2- and TRAF6 NF-kappa-B signaling pathways and induces the expression of pro-inflammatory cytokines. In kidney, prevents infection by uropathogenic bacteria by inducing the production of cytokines, chemokines and antimicrobial substances. In gut, involved in host-microbiota interactions, plays a critical role in promoting the recruitment of immune cells and intestinal inflammation. This chain is Leucine-rich repeat-containing protein 19, found in Mus musculus (Mouse).